The chain runs to 171 residues: Urease accessory protein UreE (171 aa).

A disordered region spans residues 143–171; that stretch reads SGGHQHHHGHDHDHGHHGHDHDHHHPDHE. The segment covering 152–171 has biased composition (basic and acidic residues); sequence HDHDHGHHGHDHDHHHPDHE.

The protein belongs to the UreE family.

It localises to the cytoplasm. Its function is as follows. Involved in urease metallocenter assembly. Binds nickel. Probably functions as a nickel donor during metallocenter assembly. This chain is Urease accessory protein UreE, found in Brucella abortus biovar 1 (strain 9-941).